The primary structure comprises 212 residues: uncharacterized protein (212 aa).

Positions 97–151 (SDASEAKNDDRRSDGRFALYSVSDTPETTTASRSADRSTNPKTAKHPKSAAKPTV) are disordered. A compositionally biased stretch (basic and acidic residues) spans 100–111 (SEAKNDDRRSDG).

This is an uncharacterized protein from Mycobacterium tuberculosis (strain CDC 1551 / Oshkosh).